The primary structure comprises 702 residues: Phosphoribosylformylglycinamidine synthase subunit PurL (702 aa).

The active site involves His-36. 2 residues coordinate ATP: Tyr-39 and Lys-80. Glu-82 contacts Mg(2+). Substrate is bound by residues 83–86 (SHNH) and Arg-105. His-84 serves as the catalytic Proton acceptor. Position 106 (Asp-106) interacts with Mg(2+). Gln-225 provides a ligand contact to substrate. Asp-251 provides a ligand contact to Mg(2+). A substrate-binding site is contributed by 293–295 (ETQ). Residues Asp-468 and Gly-505 each contribute to the ATP site. Ser-508 serves as a coordination point for substrate.

Belongs to the FGAMS family. As to quaternary structure, monomer. Part of the FGAM synthase complex composed of 1 PurL, 1 PurQ and 2 PurS subunits.

It localises to the cytoplasm. It catalyses the reaction N(2)-formyl-N(1)-(5-phospho-beta-D-ribosyl)glycinamide + L-glutamine + ATP + H2O = 2-formamido-N(1)-(5-O-phospho-beta-D-ribosyl)acetamidine + L-glutamate + ADP + phosphate + H(+). It participates in purine metabolism; IMP biosynthesis via de novo pathway; 5-amino-1-(5-phospho-D-ribosyl)imidazole from N(2)-formyl-N(1)-(5-phospho-D-ribosyl)glycinamide: step 1/2. In terms of biological role, part of the phosphoribosylformylglycinamidine synthase complex involved in the purines biosynthetic pathway. Catalyzes the ATP-dependent conversion of formylglycinamide ribonucleotide (FGAR) and glutamine to yield formylglycinamidine ribonucleotide (FGAM) and glutamate. The FGAM synthase complex is composed of three subunits. PurQ produces an ammonia molecule by converting glutamine to glutamate. PurL transfers the ammonia molecule to FGAR to form FGAM in an ATP-dependent manner. PurS interacts with PurQ and PurL and is thought to assist in the transfer of the ammonia molecule from PurQ to PurL. In Metallosphaera sedula (strain ATCC 51363 / DSM 5348 / JCM 9185 / NBRC 15509 / TH2), this protein is Phosphoribosylformylglycinamidine synthase subunit PurL.